Consider the following 470-residue polypeptide: Nucleoporin NUP49 (470 aa).

The span at 1-13 (MSLFGTNTTSQTP) shows a compositional bias: polar residues. Positions 1-92 (MSLFGTNTTS…STTTTTSQPQ (92 aa)) are disordered. GLFG repeat units lie at residues 17–20 (GLFG), 45–48 (GLFG), 63–66 (GLFG), 79–82 (GLFG), 96–99 (GLFG), 111–114 (GLFG), 127–130 (GLFG), 142–145 (GLFG), 156–159 (GLFG), 168–171 (GLFG), 181–184 (GLFG), and 193–197 (GLFGQ). The segment covering 20–31 (GTTTSQSAQTGS) has biased composition (low complexity). The span at 32–74 (LFGTATSQPQQTGGLFGSTATQTPSSQLQSTGLFGSTTATSQP) shows a compositional bias: polar residues. Low complexity predominate over residues 75 to 92 (QQTGGLFGSTTTTTSQPQ). The interval 196–221 (GQSTTQPQQQQNATPGLTMGQSTNTQ) is disordered. The segment covering 197–206 (QSTTQPQQQQ) has biased composition (low complexity). A compositionally biased stretch (polar residues) spans 207-221 (NATPGLTMGQSTNTQ). 2 coiled-coil regions span residues 239 to 270 (TRFN…EAVD) and 375 to 401 (FSKT…AHLT).

This sequence belongs to the nucleoporin GLFG family. As to quaternary structure, component of the nuclear pore complex (NPC). NPC constitutes the exclusive means of nucleocytoplasmic transport. NPCs allow the passive diffusion of ions and small molecules and the active, nuclear transport receptor-mediated bidirectional transport of macromolecules such as proteins, RNAs, ribonucleoparticles (RNPs), and ribosomal subunits across the nuclear envelope. Due to its 8-fold rotational symmetry, all subunits are present with 8 copies or multiples thereof.

The protein resides in the nucleus. Its subcellular location is the nuclear pore complex. It localises to the nucleus membrane. Functionally, functions as a component of the nuclear pore complex (NPC). NPC components, collectively referred to as nucleoporins (NUPs), can play the role of both NPC structural components and of docking or interaction partners for transiently associated nuclear transport factors. Active directional transport is assured by both, a Phe-Gly (FG) repeat affinity gradient for these transport factors across the NPC and a transport cofactor concentration gradient across the nuclear envelope (GSP1 and GSP2 GTPases associated predominantly with GTP in the nucleus, with GDP in the cytoplasm). NUP49 plays an important role in several nuclear transport pathways including poly(A)+ RNA, tRNA, and pre-ribosome transport. This Chaetomium thermophilum (strain DSM 1495 / CBS 144.50 / IMI 039719) (Thermochaetoides thermophila) protein is Nucleoporin NUP49 (NUP49).